The following is a 117-amino-acid chain: Putative membrane protein insertion efficiency factor (117 aa).

This sequence belongs to the UPF0161 family.

It is found in the cell inner membrane. In terms of biological role, could be involved in insertion of integral membrane proteins into the membrane. This Bartonella bacilliformis (strain ATCC 35685 / KC583 / Herrer 020/F12,63) protein is Putative membrane protein insertion efficiency factor.